Consider the following 200-residue polypeptide: Arylesterase (200 aa).

Residues 1 to 19 form the signal peptide; that stretch reads MIRLLSLVLFFCLSAASQA. Ser29 acts as the Nucleophile in catalysis. Residues Asp176 and His179 contribute to the active site.

The protein belongs to the 'GDSL' lipolytic enzyme family. In terms of assembly, homodimer.

The catalysed reaction is a phenyl acetate + H2O = a phenol + acetate + H(+). Its function is as follows. Favors the hydrolysis of several arylesters. This chain is Arylesterase, found in Vibrio mimicus.